Reading from the N-terminus, the 424-residue chain is Nuclear hormone receptor family member nhr-55 (424 aa).

The segment covering 1–19 has biased composition (low complexity); sequence MNSPSSSSSFCSSSSSPSS. The segment at 1–20 is disordered; sequence MNSPSSSSSFCSSSSSPSSL. Positions 25–100 form a DNA-binding region, nuclear receptor; that stretch reads PDTCQVCGQK…VGMTIENFQF (76 aa). 2 consecutive NR C4-type zinc fingers follow at residues 28–55 and 64–88; these read CQVCGQKSHGKHFGAVTCRACAAFFRRC and CRRNMNCEFLKNGWFNCKPCRLKKC. Residues 169 to 424 enclose the NR LBD domain; it reads EVPLHTPNAL…FSHPEVFIDL (256 aa).

This sequence belongs to the nuclear hormone receptor family.

Its subcellular location is the nucleus. In terms of biological role, orphan nuclear receptor. This is Nuclear hormone receptor family member nhr-55 (nhr-55) from Caenorhabditis elegans.